The following is a 500-amino-acid chain: Cytochrome P450 11B2, mitochondrial (500 aa).

Residues 1–24 (MALRAKADVWLARPWQCLPRTRAL) constitute a mitochondrion transit peptide. 21-hydroxyprogesterone is bound at residue Phe-381. Cys-447 is a binding site for heme.

It belongs to the cytochrome P450 family. Requires heme as cofactor. Adrenal gland.

Its subcellular location is the mitochondrion inner membrane. It catalyses the reaction a steroid + 2 reduced [adrenodoxin] + O2 + 2 H(+) = an 11beta-hydroxysteroid + 2 oxidized [adrenodoxin] + H2O. The enzyme catalyses 21-hydroxyprogesterone + 2 reduced [adrenodoxin] + O2 + 2 H(+) = corticosterone + 2 oxidized [adrenodoxin] + H2O. The catalysed reaction is corticosterone + 2 reduced [adrenodoxin] + O2 + 2 H(+) = 18-hydroxycorticosterone + 2 oxidized [adrenodoxin] + H2O. It carries out the reaction 18-hydroxycorticosterone + 2 reduced [adrenodoxin] + O2 + 2 H(+) = aldosterone + 2 oxidized [adrenodoxin] + 2 H2O. It catalyses the reaction 11-deoxycortisol + 2 reduced [adrenodoxin] + O2 + 2 H(+) = cortisol + 2 oxidized [adrenodoxin] + H2O. The enzyme catalyses 21-hydroxyprogesterone + 2 reduced [adrenodoxin] + O2 + 2 H(+) = 18-hydroxy-11-deoxycorticosterone + 2 oxidized [adrenodoxin] + H2O. The catalysed reaction is cortisol + 2 reduced [adrenodoxin] + O2 + 2 H(+) = 18-hydroxycortisol + 2 oxidized [adrenodoxin] + H2O. It carries out the reaction 18-hydroxycortisol + 2 reduced [adrenodoxin] + O2 + 2 H(+) = 18-oxocortisol + 2 oxidized [adrenodoxin] + 2 H2O. It functions in the pathway steroid biosynthesis. Functionally, a cytochrome P450 monooxygenase that catalyzes the biosynthesis of aldosterone, the main mineralocorticoid in the human body responsible for salt and water homeostasis, thus involved in blood pressure regulation, arterial hypertension, and the development of heart failure. Catalyzes three sequential oxidative reactions of 11-deoxycorticosterone (21-hydroxyprogesterone), namely 11-beta hydroxylation, followed by two successive oxidations at C18 yielding 18-hydroxy and then 18-oxo intermediates (that would not leave the enzyme active site during the consecutive hydroxylation reactions), ending with the formation of aldosterone. Can also produce 18-hydroxycortisol and 18-oxocortisol, derived from successive oxidations of cortisol at C18, normally found at very low levels, but significantly increased in primary aldosteronism, the most common form of secondary hypertension. Mechanistically, uses molecular oxygen inserting one oxygen atom into a substrate and reducing the second into a water molecule. Two electrons are provided by NADPH via a two-protein mitochondrial transfer system comprising flavoprotein FDXR (adrenodoxin/ferredoxin reductase) and nonheme iron-sulfur protein FDX1 or FDX2 (adrenodoxin/ferredoxin). Could also be involved in the androgen metabolic pathway. The sequence is that of Cytochrome P450 11B2, mitochondrial (CYP11B2) from Mesocricetus auratus (Golden hamster).